The primary structure comprises 89 residues: Small ribosomal subunit protein uS17 (89 aa).

It belongs to the universal ribosomal protein uS17 family. In terms of assembly, part of the 30S ribosomal subunit.

One of the primary rRNA binding proteins, it binds specifically to the 5'-end of 16S ribosomal RNA. This Coxiella burnetii (strain Dugway 5J108-111) protein is Small ribosomal subunit protein uS17.